The primary structure comprises 449 residues: 3-phosphoshikimate 1-carboxyvinyltransferase (449 aa).

The segment at 1-30 (MSHDSSPQPLTAAPGAPLRGRLRPPGDKSI) is disordered. 3-phosphoshikimate contacts are provided by Lys-28, Ser-29, and Arg-33. Residue Lys-28 participates in phosphoenolpyruvate binding. Phosphoenolpyruvate-binding residues include Gly-101 and Arg-129. 3-phosphoshikimate contacts are provided by Ser-175, Gln-177, Asp-330, and Lys-357. Gln-177 contributes to the phosphoenolpyruvate binding site. Asp-330 acts as the Proton acceptor in catalysis. Positions 361 and 405 each coordinate phosphoenolpyruvate.

The protein belongs to the EPSP synthase family. Monomer.

Its subcellular location is the cytoplasm. It carries out the reaction 3-phosphoshikimate + phosphoenolpyruvate = 5-O-(1-carboxyvinyl)-3-phosphoshikimate + phosphate. Its pathway is metabolic intermediate biosynthesis; chorismate biosynthesis; chorismate from D-erythrose 4-phosphate and phosphoenolpyruvate: step 6/7. Functionally, catalyzes the transfer of the enolpyruvyl moiety of phosphoenolpyruvate (PEP) to the 5-hydroxyl of shikimate-3-phosphate (S3P) to produce enolpyruvyl shikimate-3-phosphate and inorganic phosphate. The sequence is that of 3-phosphoshikimate 1-carboxyvinyltransferase from Methylobacterium radiotolerans (strain ATCC 27329 / DSM 1819 / JCM 2831 / NBRC 15690 / NCIMB 10815 / 0-1).